Here is a 246-residue protein sequence, read N- to C-terminus: tRNA pseudouridine synthase A (246 aa).

Aspartate 52 serves as the catalytic Nucleophile. Tyrosine 111 is a binding site for substrate.

It belongs to the tRNA pseudouridine synthase TruA family. Homodimer.

The enzyme catalyses uridine(38/39/40) in tRNA = pseudouridine(38/39/40) in tRNA. In terms of biological role, formation of pseudouridine at positions 38, 39 and 40 in the anticodon stem and loop of transfer RNAs. The polypeptide is tRNA pseudouridine synthase A (Fervidobacterium nodosum (strain ATCC 35602 / DSM 5306 / Rt17-B1)).